The primary structure comprises 179 residues: 3-hydroxyanthranilate 3,4-dioxygenase (179 aa).

Arginine 47 lines the O2 pocket. Fe cation is bound by residues histidine 51, glutamate 57, and histidine 96. Substrate is bound at residue glutamate 57. 2 residues coordinate substrate: arginine 100 and glutamate 110. The Fe cation site is built by cysteine 125, cysteine 128, cysteine 162, and cysteine 165.

Belongs to the 3-HAO family. The cofactor is Fe(2+).

The enzyme catalyses 3-hydroxyanthranilate + O2 = (2Z,4Z)-2-amino-3-carboxymuconate 6-semialdehyde. It participates in cofactor biosynthesis; NAD(+) biosynthesis; quinolinate from L-kynurenine: step 3/3. Its function is as follows. Catalyzes the oxidative ring opening of 3-hydroxyanthranilate to 2-amino-3-carboxymuconate semialdehyde, which spontaneously cyclizes to quinolinate. The sequence is that of 3-hydroxyanthranilate 3,4-dioxygenase from Bacillus cereus (strain ATCC 10987 / NRS 248).